Here is a 117-residue protein sequence, read N- to C-terminus: Immunoglobulin lambda variable 7-46 (117 aa).

Positions 1-19 (MAWTPLFLFLLTCCPGSNS) are cleaved as a signal peptide. Residues 20 to 44 (QAVVTQEPSLTVSPGGTVTLTCGSS) form a framework-1 region. The 98-residue stretch at 20 to 117 (QAVVTQEPSL…YCLLSYSGAR (98 aa)) folds into the Ig-like domain. C41 and C109 are joined by a disulfide. The tract at residues 45–53 (TGAVTSGHY) is complementarity-determining-1. Residues 54-70 (PYWFQQKPGQAPRTLIY) form a framework-2 region. The segment at 71-73 (DTS) is complementarity-determining-2. A framework-3 region spans residues 74-109 (NKHSWTPARFSGSLLGGKAALTLLGAQPEDEAEYYC). A complementarity-determining-3 region spans residues 110–117 (LLSYSGAR).

As to quaternary structure, immunoglobulins are composed of two identical heavy chains and two identical light chains; disulfide-linked.

The protein resides in the secreted. It localises to the cell membrane. Its function is as follows. V region of the variable domain of immunoglobulin light chains that participates in the antigen recognition. Immunoglobulins, also known as antibodies, are membrane-bound or secreted glycoproteins produced by B lymphocytes. In the recognition phase of humoral immunity, the membrane-bound immunoglobulins serve as receptors which, upon binding of a specific antigen, trigger the clonal expansion and differentiation of B lymphocytes into immunoglobulins-secreting plasma cells. Secreted immunoglobulins mediate the effector phase of humoral immunity, which results in the elimination of bound antigens. The antigen binding site is formed by the variable domain of one heavy chain, together with that of its associated light chain. Thus, each immunoglobulin has two antigen binding sites with remarkable affinity for a particular antigen. The variable domains are assembled by a process called V-(D)-J rearrangement and can then be subjected to somatic hypermutations which, after exposure to antigen and selection, allow affinity maturation for a particular antigen. In Homo sapiens (Human), this protein is Immunoglobulin lambda variable 7-46.